Reading from the N-terminus, the 131-residue chain is Large ribosomal subunit protein bL19c (131 aa).

Belongs to the bacterial ribosomal protein bL19 family.

The protein resides in the plastid. Its subcellular location is the cyanelle. In terms of biological role, this protein is located at the 30S-50S ribosomal subunit interface and may play a role in the structure and function of the aminoacyl-tRNA binding site. In Cyanophora paradoxa, this protein is Large ribosomal subunit protein bL19c (rpl19).